Consider the following 179-residue polypeptide: Adenine phosphoribosyltransferase (179 aa).

This sequence belongs to the purine/pyrimidine phosphoribosyltransferase family. In terms of assembly, homodimer.

It is found in the cytoplasm. It catalyses the reaction AMP + diphosphate = 5-phospho-alpha-D-ribose 1-diphosphate + adenine. Its pathway is purine metabolism; AMP biosynthesis via salvage pathway; AMP from adenine: step 1/1. Catalyzes a salvage reaction resulting in the formation of AMP, that is energically less costly than de novo synthesis. This Helicobacter pylori (strain G27) protein is Adenine phosphoribosyltransferase.